A 341-amino-acid chain; its full sequence is MEEGSLWRQWTMFRSLLSILQWWGFNVTVIIMNKWIFQKLDFKFPLSVSCVHFICSSIGAYIVIKVLKLKPLIVVDPEDRWRRIFPMSFVFCINIVLGNISLRYIPVSFMQTIKSLTPATTVVLQWLVWRKYFDWRIWASLVPIVGGILLTSITELSFNVFGFCAALFGCLATSTKTILAESLLHGYKFDSINTVYYMAPFATMILGLPAFLLERNGILDWFEAHPSPWSALIILFNSGVLAFCLNFSIFYVIQSTTAVTFNVAGNLKVAVAVFVSWMIFRNPISPMNAVGCGITLVGCTFYGYVRHMLSQQQPGTPRTPRTPRNKMELIPLVNDKLESKI.

Helical transmembrane passes span 17–37 (LSIL…KWIF), 44–64 (FPLS…YIVI), 89–109 (FVFC…PVSF), 141–161 (LVPI…FNVF), 192–212 (INTV…PAFL), 233–253 (IILF…FYVI), 260–280 (TFNV…WMIF), and 284–304 (ISPM…FYGY). Positions 33–152 (NKWIFQKLDF…PIVGGILLTS (120 aa)) constitute an EamA domain.

This sequence belongs to the TPT transporter family. TPT (TC 2.A.7.9) subfamily. As to expression, expressed in rosette leaves, flowers and siliques.

Its subcellular location is the golgi apparatus membrane. In terms of biological role, GDP-mannose transporter that may be involved in the import of GDP-mannose from the cytoplasm into the Golgi lumen. This Arabidopsis thaliana (Mouse-ear cress) protein is GDP-mannose transporter GONST5 (GONST5).